The sequence spans 418 residues: Tektin-1 (418 aa).

4 coiled-coil regions span residues 20-107 (NKSQ…SYKE), 134-177 (QELQ…DLRD), 266-308 (NGLK…QQEG), and 332-383 (IAQY…ENTI).

This sequence belongs to the tektin family. In terms of assembly, microtubule inner protein component of sperm flagellar doublet microtubules. Ubiquitinated, leading to its degradation. Deubiquitinated by USP16, promoting its stability.

Its subcellular location is the cytoplasm. The protein resides in the cytoskeleton. The protein localises to the cilium axoneme. It is found in the flagellum axoneme. In terms of biological role, microtubule inner protein (MIP) part of the dynein-decorated doublet microtubules (DMTs) in cilia and flagellar axoneme. Forms filamentous polymers in the walls of ciliary and flagellar microtubules. In Mus musculus (Mouse), this protein is Tektin-1 (Tekt1).